Consider the following 551-residue polypeptide: Scaffold protein OPG125 (551 aa).

This sequence belongs to the orthopoxvirus protein OPG125 family. Interacts with the late transcription elongation factor VLTF-4/OPG110. Interacts with the late transcription factors VLTF-1.

Its subcellular location is the membrane. Acts with RNA polymerase to initiate transcription from late gene promoters. The polypeptide is Scaffold protein OPG125 (OPG125) (Monkeypox virus).